Here is a 973-residue protein sequence, read N- to C-terminus: Ras-related protein Rab-44 (973 aa).

A compositionally biased stretch (basic residues) spans 1 to 21 (MEKGKGVSRKGRKLASSRRRQ). The tract at residues 1–42 (MEKGKGVSRKGRKLASSRRRQAREPADGQDAPVAAEAESWPS) is disordered. One can recognise an EF-hand domain in the interval 77–111 (GGEEPQMIFDWVDVESRGHLSLEEFSSGLKNVFGS). The segment at 112–140 (SPGTHRLRTKRSLPSQRESVTSTLPVPEE) is disordered. Polar residues predominate over residues 123 to 135 (SLPSQRESVTSTL). Residues 219-310 (LYKVRQLYEE…ERDLAGQLEE (92 aa)) adopt a coiled-coil conformation. Disordered regions lie at residues 319–368 (RGHL…FGNN), 421–481 (FSQE…GSFL), 493–708 (GTVE…GLAV), and 724–779 (EAQP…GKPQ). A compositionally biased stretch (pro residues) spans 428-440 (DPDPGPRGSPEVP). Basic and acidic residues predominate over residues 445–457 (KDGKGVEDPKGQD). Positions 513–524 (GLSSSPQSPAGS) are enriched in low complexity. Basic and acidic residues-rich tracts occupy residues 548-559 (SLEREVMAEDLK), 598-608 (HLARQESHAKG), and 654-663 (SESHGLEARS). The span at 665-680 (ESPQQDDPLPNTSQPP) shows a compositional bias: polar residues. The span at 750–766 (AESRPEDPRTDLQEAER) shows a compositional bias: basic and acidic residues. Residues 792–799 (GDSNVGKT), 840–844 (DTAGQ), and 898–901 (NKMD) each bind GTP. Residues cysteine 971 and cysteine 972 are each lipidated (S-geranylgeranyl cysteine).

This sequence belongs to the small GTPase superfamily. Rab family.

It localises to the cell membrane. This is Ras-related protein Rab-44 (Rab44) from Mus musculus (Mouse).